We begin with the raw amino-acid sequence, 542 residues long: CTP synthase (542 aa).

Positions 1–265 (MARYVFITGG…DSEVLSAFGI (265 aa)) are amidoligase domain. Residue Ser13 participates in CTP binding. Ser13 is a UTP binding site. Residue 14–19 (SLGKGI) participates in ATP binding. Position 54 (Tyr54) interacts with L-glutamine. ATP is bound at residue Asp71. Residues Asp71 and Glu139 each coordinate Mg(2+). CTP contacts are provided by residues 146–148 (DIE), 186–191 (KTKPTQ), and Lys222. UTP-binding positions include 186–191 (KTKPTQ) and Lys222. Positions 291 to 541 (TIAVVGKYTG…IEAAIEQSRL (251 aa)) constitute a Glutamine amidotransferase type-1 domain. Gly353 contacts L-glutamine. The active-site Nucleophile; for glutamine hydrolysis is the Cys380. Residues 381-384 (FGMQ), Glu404, and Arg469 contribute to the L-glutamine site. Active-site residues include His514 and Glu516.

Belongs to the CTP synthase family. Homotetramer.

It carries out the reaction UTP + L-glutamine + ATP + H2O = CTP + L-glutamate + ADP + phosphate + 2 H(+). The enzyme catalyses L-glutamine + H2O = L-glutamate + NH4(+). It catalyses the reaction UTP + NH4(+) + ATP = CTP + ADP + phosphate + 2 H(+). It functions in the pathway pyrimidine metabolism; CTP biosynthesis via de novo pathway; CTP from UDP: step 2/2. Allosterically activated by GTP, when glutamine is the substrate; GTP has no effect on the reaction when ammonia is the substrate. The allosteric effector GTP functions by stabilizing the protein conformation that binds the tetrahedral intermediate(s) formed during glutamine hydrolysis. Inhibited by the product CTP, via allosteric rather than competitive inhibition. Catalyzes the ATP-dependent amination of UTP to CTP with either L-glutamine or ammonia as the source of nitrogen. Regulates intracellular CTP levels through interactions with the four ribonucleotide triphosphates. This chain is CTP synthase, found in Brucella abortus (strain 2308).